Consider the following 449-residue polypeptide: MKKIKVRYAPSPTGFLHIGNARTALFNYLFAKQNQGEFIIRIEDTDFSRNVEGGEASQLKNLRWLGIDWSEGPDIQGPFGPYRQSERLAIYQKYAQKLLDQDLAYKEFQEGHTTFAIRFRVPTNQTFAFDDLIRGKLTFQSQEIEDFIILKSNGYPSYNFAVVIDDHLMQISHIFRGEEHITNTPKQIMIYQAFQWHLPQFAHMTLILNENKKKLSKRDANIMQFIEQYEKLGYLPQALFNFLSLLGFSPLSQTEILSPQELINLFDVARLNKAPAMFDKTKLDYLNNQHLRKLLPEVIASFILQKKYLALTTAPTNYKEWMTKFVALFQDRMHYMQQITDFYQLFFQSTPFLSQEATHFLQTNPQTTLILKTFYNVFDVIVFEKDVIANSIKQVTTQNDFAKKTLFMALRIGTTCKMHGPSIALLLELLGKKQVLKNLSYVLEQAQKF.

The 'HIGH' region signature appears at 10–20 (PSPTGFLHIGN). Positions 214–218 (KLSKR) match the 'KMSKS' region motif. Lys-217 contacts ATP.

Belongs to the class-I aminoacyl-tRNA synthetase family. Glutamate--tRNA ligase type 1 subfamily. Monomer.

Its subcellular location is the cytoplasm. The enzyme catalyses tRNA(Glu) + L-glutamate + ATP = L-glutamyl-tRNA(Glu) + AMP + diphosphate. Its function is as follows. Catalyzes the attachment of glutamate to tRNA(Glu) in a two-step reaction: glutamate is first activated by ATP to form Glu-AMP and then transferred to the acceptor end of tRNA(Glu). This chain is Glutamate--tRNA ligase, found in Onion yellows phytoplasma (strain OY-M).